A 158-amino-acid chain; its full sequence is NAD(P)H-quinone oxidoreductase subunit J, chloroplastic (158 aa).

This sequence belongs to the complex I 30 kDa subunit family. As to quaternary structure, NDH is composed of at least 16 different subunits, 5 of which are encoded in the nucleus.

The protein localises to the plastid. It localises to the chloroplast thylakoid membrane. It catalyses the reaction a plastoquinone + NADH + (n+1) H(+)(in) = a plastoquinol + NAD(+) + n H(+)(out). The enzyme catalyses a plastoquinone + NADPH + (n+1) H(+)(in) = a plastoquinol + NADP(+) + n H(+)(out). In terms of biological role, NDH shuttles electrons from NAD(P)H:plastoquinone, via FMN and iron-sulfur (Fe-S) centers, to quinones in the photosynthetic chain and possibly in a chloroplast respiratory chain. The immediate electron acceptor for the enzyme in this species is believed to be plastoquinone. Couples the redox reaction to proton translocation, and thus conserves the redox energy in a proton gradient. This is NAD(P)H-quinone oxidoreductase subunit J, chloroplastic from Amborella trichopoda.